We begin with the raw amino-acid sequence, 452 residues long: MEVTTRLTWNDENHLRKLLGNVSLSLLYKSSVHGGSIEDMVERCSRQGCTITMAYIDYNMIVAFMLGNYINLHESSTEPNDSLWFSLQKKNDTTEIETLLLNTAPKIIDEQLVCRLSKTDIFIICRDNKIYLDKMITRNLKLRFYGHRQYLECEVFRVEGIKDNLDDIKRIIKAREHRNRLLADIRDYRPYADLVSEIRILLVGPVGSGKSSFFNSVKSIFHGHVTGQAVVGSDITSITERYRIYSVKDGKNGKSLPFMLCDTMGLDGAEGAGLCMDDIPHILKGCMPDRYQFNSRKPITPEHSTFITSPSLKDRIHCVAYVLDINSIDNLYSKMLAKVKQVHKEVLNCGIAYVALLTKVDDCSEVLQDNFLNMSRSMTSQSRVMNVHKMLGIPISNILMVGNYASDLELDPMKDILILSALRQMLRAADDFLEDLPLEETGAIERALQPCI.

The 159-residue stretch at 1–159 (MEVTTRLTWN…YLECEVFRVE (159 aa)) folds into the TLDc domain.

It belongs to the IFI44 family. As to quaternary structure, interacts with FKBP5; this interaction modulates IKBKB and IKBKE kinase activities.

It is found in the cytoplasm. Functionally, type I interferon-stimulated gene (ISG) that plays a critical role in antiviral and antibacterial activity. During bacterial infection, promotes macrophage differentiation and facilitates inflammatory cytokine secretion. Plays a role in the control of respiratory syncytial virus/RSV infection, reducing the ability of the virus to replicate. Exhibits a low antiviral activity against hepatitis C virus. Also acts as a feedback regulator of IFN responses by negatively regulating IKBKB and IKBKE kinase activities through interaction with FKBP5. This chain is Interferon-induced protein 44-like (IFI44L), found in Homo sapiens (Human).